Reading from the N-terminus, the 543-residue chain is Ribonuclease Y (543 aa).

Residues 4-24 (IIMIPVATAIVSLLVGTVIGY) form a helical membrane-spanning segment. The region spanning 233–296 (TVSVVDLPNE…EIAKRAMERL (64 aa)) is the KH domain. The region spanning 359–452 (VLSHSIEVGK…VVAADTISSA (94 aa)) is the HD domain.

It belongs to the RNase Y family.

It localises to the cell membrane. Functionally, endoribonuclease that initiates mRNA decay. The polypeptide is Ribonuclease Y (Lactobacillus helveticus (strain DPC 4571)).